The primary structure comprises 196 residues: dCTP deaminase, dUMP-forming (196 aa).

DCTP-binding positions include 101–106 (KSSLGR), Asp119, 127–129 (TLE), Gln148, Tyr162, and Gln174. Glu129 (proton donor/acceptor) is an active-site residue.

Belongs to the dCTP deaminase family. In terms of assembly, homotrimer.

It carries out the reaction dCTP + 2 H2O = dUMP + NH4(+) + diphosphate. Its pathway is pyrimidine metabolism; dUMP biosynthesis; dUMP from dCTP: step 1/1. Its function is as follows. Bifunctional enzyme that catalyzes both the deamination of dCTP to dUTP and the hydrolysis of dUTP to dUMP without releasing the toxic dUTP intermediate. This chain is dCTP deaminase, dUMP-forming, found in Tropheryma whipplei (strain TW08/27) (Whipple's bacillus).